Reading from the N-terminus, the 441-residue chain is Ribulose bisphosphate carboxylase large chain (441 aa).

Substrate contacts are provided by N89 and T139. K141 functions as the Proton acceptor in the catalytic mechanism. Residue K143 participates in substrate binding. 3 residues coordinate Mg(2+): K167, D169, and E170. Residue K167 is modified to N6-carboxylysine. H260 acts as the Proton acceptor in catalysis. Substrate is bound by residues R261, H293, and S345.

This sequence belongs to the RuBisCO large chain family. Type I subfamily. In terms of assembly, heterohexadecamer of 8 large chains and 8 small chains; disulfide-linked. The disulfide link is formed within the large subunit homodimers. Requires Mg(2+) as cofactor. The disulfide bond which can form in the large chain dimeric partners within the hexadecamer appears to be associated with oxidative stress and protein turnover.

The protein resides in the plastid. It localises to the chloroplast. It carries out the reaction 2 (2R)-3-phosphoglycerate + 2 H(+) = D-ribulose 1,5-bisphosphate + CO2 + H2O. The catalysed reaction is D-ribulose 1,5-bisphosphate + O2 = 2-phosphoglycolate + (2R)-3-phosphoglycerate + 2 H(+). Functionally, ruBisCO catalyzes two reactions: the carboxylation of D-ribulose 1,5-bisphosphate, the primary event in carbon dioxide fixation, as well as the oxidative fragmentation of the pentose substrate in the photorespiration process. Both reactions occur simultaneously and in competition at the same active site. The protein is Ribulose bisphosphate carboxylase large chain of Symphoricarpos albus (Common snowberry).